We begin with the raw amino-acid sequence, 299 residues long: Protein-methionine-sulfoxide reductase catalytic subunit MsrP (299 aa).

The segment at residues 1–44 (MAHRWINDLTPADITPRGAWMNRRQVMAGMAGAGLAAFAGSAQA) is a signal peptide (tat-type signal). Mo-molybdopterin-binding positions include Asn59, 62–63 (YE), Cys117, Thr152, Asn200, Arg205, and 216–218 (SIK).

It belongs to the MsrP family. In terms of assembly, heterodimer of a catalytic subunit (MsrP) and a heme-binding subunit (MsrQ). Mo-molybdopterin serves as cofactor. Predicted to be exported by the Tat system. The position of the signal peptide cleavage has not been experimentally proven.

Its subcellular location is the periplasm. The enzyme catalyses L-methionyl-[protein] + a quinone + H2O = L-methionyl-(S)-S-oxide-[protein] + a quinol. The catalysed reaction is L-methionyl-[protein] + a quinone + H2O = L-methionyl-(R)-S-oxide-[protein] + a quinol. In terms of biological role, part of the MsrPQ system that repairs oxidized periplasmic proteins containing methionine sulfoxide residues (Met-O), using respiratory chain electrons. Thus protects these proteins from oxidative-stress damage caused by reactive species of oxygen and chlorine generated by the host defense mechanisms. MsrPQ is essential for the maintenance of envelope integrity under bleach stress, rescuing a wide series of structurally unrelated periplasmic proteins from methionine oxidation. The catalytic subunit MsrP is non-stereospecific, being able to reduce both (R-) and (S-) diastereoisomers of methionine sulfoxide. The protein is Protein-methionine-sulfoxide reductase catalytic subunit MsrP of Ruegeria pomeroyi (strain ATCC 700808 / DSM 15171 / DSS-3) (Silicibacter pomeroyi).